Here is a 327-residue protein sequence, read N- to C-terminus: Tetraacyldisaccharide 4'-kinase (327 aa).

Residue Phe-56–Thr-63 coordinates ATP.

It belongs to the LpxK family.

The enzyme catalyses a lipid A disaccharide + ATP = a lipid IVA + ADP + H(+). Its pathway is glycolipid biosynthesis; lipid IV(A) biosynthesis; lipid IV(A) from (3R)-3-hydroxytetradecanoyl-[acyl-carrier-protein] and UDP-N-acetyl-alpha-D-glucosamine: step 6/6. Functionally, transfers the gamma-phosphate of ATP to the 4'-position of a tetraacyldisaccharide 1-phosphate intermediate (termed DS-1-P) to form tetraacyldisaccharide 1,4'-bis-phosphate (lipid IVA). In Halorhodospira halophila (strain DSM 244 / SL1) (Ectothiorhodospira halophila (strain DSM 244 / SL1)), this protein is Tetraacyldisaccharide 4'-kinase.